The chain runs to 223 residues: Ribosome maturation factor RimM (223 aa).

The span at 1–12 (MARRPGSSSRGP) shows a compositional bias: low complexity. Disordered stretches follow at residues 1–44 (MARR…DPGL) and 203–223 (VADPPDDLFAPPGPKPADDPG). Residues 135–210 (DEDEFFLTDL…KVVADPPDDL (76 aa)) enclose the PRC barrel domain.

This sequence belongs to the RimM family. In terms of assembly, binds ribosomal protein uS19.

It localises to the cytoplasm. Functionally, an accessory protein needed during the final step in the assembly of 30S ribosomal subunit, possibly for assembly of the head region. Essential for efficient processing of 16S rRNA. May be needed both before and after RbfA during the maturation of 16S rRNA. It has affinity for free ribosomal 30S subunits but not for 70S ribosomes. This Methylorubrum extorquens (strain CM4 / NCIMB 13688) (Methylobacterium extorquens) protein is Ribosome maturation factor RimM.